A 166-amino-acid polypeptide reads, in one-letter code: AP-3 complex subunit sigma (166 aa).

It belongs to the adaptor complexes small subunit family. As to quaternary structure, adaptor protein complex 3 (AP-3) is a heterotetramer composed of two large adaptins (delta-type subunit and beta-type subunit), a medium adaptin (mu-type subunit) and a small adaptin (sigma-type subunit).

It is found in the cytoplasm. The protein resides in the golgi apparatus. It localises to the cytoplasmic vesicle membrane. Part of the AP-3 complex, an adaptor-related complex which seems to be clathrin-associated. The complex is associated with the Golgi region as well as more peripheral structures. It facilitates the budding of vesicles from the Golgi membrane and may be directly involved in trafficking to the vacuole. It also function in maintaining the identity of lytic vacuoles and in regulating the transition between storage and lytic vacuoles. This Arabidopsis thaliana (Mouse-ear cress) protein is AP-3 complex subunit sigma.